The following is a 270-amino-acid chain: MRADIVTIFPAYLEPLRLSLVGRAQEHGTLQIHTHDLRMWTTDVHRTVDDAPYGGGPGMVMRPEPWDAALSQITARVADSRPRVVVPTPAGTPFTQRHAEELAREPWLVFCCGRYEGIDARVIETWADDEISIGDYVLAGGEAATLVILEAVTRLLPGVLGNSASVADDSFSDGLLEGPVYTRPPVWRGTEVPPVLRSGDHEAIARWRRSQALRRTLLRRPDLLEHREFAEADRVVLAAAAAEAAGRMLPAPTEGTGLIHHRDVEGPGEG.

Residues glycine 113 and 133–138 each bind S-adenosyl-L-methionine; that span reads IGDYVL. A disordered region spans residues 251-270; sequence APTEGTGLIHHRDVEGPGEG. The segment covering 260–270 has biased composition (basic and acidic residues); it reads HHRDVEGPGEG.

Belongs to the RNA methyltransferase TrmD family. As to quaternary structure, homodimer.

It localises to the cytoplasm. The enzyme catalyses guanosine(37) in tRNA + S-adenosyl-L-methionine = N(1)-methylguanosine(37) in tRNA + S-adenosyl-L-homocysteine + H(+). In terms of biological role, specifically methylates guanosine-37 in various tRNAs. In Frankia casuarinae (strain DSM 45818 / CECT 9043 / HFP020203 / CcI3), this protein is tRNA (guanine-N(1)-)-methyltransferase.